The chain runs to 255 residues: 5'-nucleotidase SurE (255 aa).

A divalent metal cation contacts are provided by aspartate 8, aspartate 9, serine 40, and asparagine 93.

It belongs to the SurE nucleotidase family. A divalent metal cation is required as a cofactor.

It is found in the cytoplasm. It catalyses the reaction a ribonucleoside 5'-phosphate + H2O = a ribonucleoside + phosphate. Functionally, nucleotidase that shows phosphatase activity on nucleoside 5'-monophosphates. The sequence is that of 5'-nucleotidase SurE from Nitrobacter winogradskyi (strain ATCC 25391 / DSM 10237 / CIP 104748 / NCIMB 11846 / Nb-255).